The chain runs to 305 residues: Oxygen-dependent coproporphyrinogen-III oxidase (305 aa).

Serine 94 serves as a coordination point for substrate. The a divalent metal cation site is built by histidine 98 and histidine 108. Residue histidine 108 is the Proton donor of the active site. Residue asparagine 110–arginine 112 coordinates substrate. Residues histidine 147 and histidine 177 each coordinate a divalent metal cation. The segment at tyrosine 242–glutamate 277 is important for dimerization. Residue glycine 260–arginine 262 participates in substrate binding.

Belongs to the aerobic coproporphyrinogen-III oxidase family. Homodimer. It depends on a divalent metal cation as a cofactor.

It is found in the cytoplasm. The catalysed reaction is coproporphyrinogen III + O2 + 2 H(+) = protoporphyrinogen IX + 2 CO2 + 2 H2O. It participates in porphyrin-containing compound metabolism; protoporphyrin-IX biosynthesis; protoporphyrinogen-IX from coproporphyrinogen-III (O2 route): step 1/1. Functionally, involved in the heme biosynthesis. Catalyzes the aerobic oxidative decarboxylation of propionate groups of rings A and B of coproporphyrinogen-III to yield the vinyl groups in protoporphyrinogen-IX. The sequence is that of Oxygen-dependent coproporphyrinogen-III oxidase from Shewanella denitrificans (strain OS217 / ATCC BAA-1090 / DSM 15013).